The sequence spans 286 residues: Probable glucose uptake protein GlcU (286 aa).

10 consecutive transmembrane segments (helical) span residues 4–22 (IFLAILPAIFWGSIVLFNV), 27–49 (GPYSQTLGTTFGALIFSIVVYIF), 53–72 (VLTPTVIGVGVVSGLFWALG), 85–107 (VSRTMPISTGLQLVATTLFGVIV), 111–133 (WSTTISVVLGILALVCIIIGVIL), 154–176 (IVILLISTVGYLVYVVVIRLFNV), 181–198 (ALLPQAVGMVLGGILLTF), 211–228 (IIPGLIWAAGNMFLFISQ), 233–255 (VATSFSLSQMGIIISTLGGILIL), and 267–284 (IVVGIVFIIAAGIMLGIA).

The protein belongs to the GRP transporter (TC 2.A.7.5) family.

The protein localises to the cell membrane. Functionally, involved in the uptake of glucose. In Bacillus cereus (strain ATCC 14579 / DSM 31 / CCUG 7414 / JCM 2152 / NBRC 15305 / NCIMB 9373 / NCTC 2599 / NRRL B-3711), this protein is Probable glucose uptake protein GlcU (glcU).